The primary structure comprises 190 residues: MPSIHPLIDNGITKGDEHFKGGKLYCHCPSNKVEVTLSSNVAHNHACGCSKCWKPKGALFSVVGVVPVDALSVTANGNKLHVVDSSAAIQRNACKDCGVHLFGRIVNDHPFKGLDFVHVELSDSKGWQEPQFAAFVSSIIEQGFPPNQIDAVREKFRKEGLQTYDVLSPTLMDLIATYTGQKSGKLSSKL.

One can recognise a CENP-V/GFA domain in the interval 19–165 (FKGGKLYCHC…FRKEGLQTYD (147 aa)). Cysteine 26, cysteine 28, cysteine 47, cysteine 49, cysteine 52, cysteine 94, and cysteine 97 together coordinate Zn(2+).

This sequence belongs to the Gfa family. Zn(2+) serves as cofactor.

The enzyme catalyses S-(hydroxymethyl)glutathione = glutathione + formaldehyde. Its pathway is one-carbon metabolism; formaldehyde degradation; formate from formaldehyde (glutathione route): step 1/3. In terms of biological role, catalyzes the condensation of formaldehyde and glutathione to S-hydroxymethylglutathione. The sequence is that of Putative glutathione-dependent formaldehyde-activating enzyme from Phaeosphaeria nodorum (strain SN15 / ATCC MYA-4574 / FGSC 10173) (Glume blotch fungus).